We begin with the raw amino-acid sequence, 484 residues long: N-succinylglutamate 5-semialdehyde dehydrogenase (484 aa).

221–226 (GSAAAG) contacts NAD(+). Catalysis depends on residues E244 and C278.

Belongs to the aldehyde dehydrogenase family. AstD subfamily.

It catalyses the reaction N-succinyl-L-glutamate 5-semialdehyde + NAD(+) + H2O = N-succinyl-L-glutamate + NADH + 2 H(+). It participates in amino-acid degradation; L-arginine degradation via AST pathway; L-glutamate and succinate from L-arginine: step 4/5. In terms of biological role, catalyzes the NAD-dependent reduction of succinylglutamate semialdehyde into succinylglutamate. The polypeptide is N-succinylglutamate 5-semialdehyde dehydrogenase (Caulobacter sp. (strain K31)).